Consider the following 142-residue polypeptide: Large ribosomal subunit protein uL13 (142 aa).

The protein belongs to the universal ribosomal protein uL13 family. As to quaternary structure, part of the 50S ribosomal subunit.

Its function is as follows. This protein is one of the early assembly proteins of the 50S ribosomal subunit, although it is not seen to bind rRNA by itself. It is important during the early stages of 50S assembly. The sequence is that of Large ribosomal subunit protein uL13 from Dictyoglomus thermophilum (strain ATCC 35947 / DSM 3960 / H-6-12).